The primary structure comprises 313 residues: Glutathione S-transferase omega-like 2 (313 aa).

The active-site Nucleophile is the cysteine 49. In terms of domain architecture, GST C-terminal spans 161–289; sequence PSSLRTKIDE…TDFKHIKCHY (129 aa).

It belongs to the GST superfamily. Omega family.

The protein localises to the cytoplasm. It localises to the nucleus. The protein resides in the golgi apparatus. It catalyses the reaction RX + glutathione = an S-substituted glutathione + a halide anion + H(+). It carries out the reaction L-dehydroascorbate + 2 glutathione = glutathione disulfide + L-ascorbate. Active as '1-Cys' thiol transferase against beta-hydroxyethyl disulfide (HED), as dehydroascorbate reductase and as dimethylarsinic acid reductase, while not active against the standard GST substrate 1-chloro-2,4-dinitrobenzene (CDNB). May be involved in cell wall organization and biogenesis. In Schizosaccharomyces pombe (strain 972 / ATCC 24843) (Fission yeast), this protein is Glutathione S-transferase omega-like 2 (gto2).